An 86-amino-acid chain; its full sequence is Secreted transmembrane peptide 6 (86 aa).

Positions 1-31 (MGMKSPNIAAFMLPLLLILFTLSSQLKVVES) are cleaved as a signal peptide. The SCOOP motif motif lies at 45-58 (IVYTPPSRSCGTSP). The short motif at 51–53 (SRS) is the SxS motif essential for MIK2 binding element.

It belongs to the serine rich endogenous peptide (SCOOP) phytocytokine family. In terms of assembly, interacts with MIK2 (via extracellular leucine-rich repeat domain); this interaction triggers the formation of complex between MIK2 and the BAK1/SERK3 and SERK4 coreceptors, and subsequent BAK1 activation by phosphorylation. Mostly expressed in leaves, and, to a lower extent, in roots, stems, siliques, seeds and flowers.

It localises to the cell membrane. The protein resides in the secreted. It is found in the extracellular space. Its subcellular location is the apoplast. Brassicaceae-specific phytocytokine (plant endogenous peptide released into the apoplast) perceived by MIK2 in a BAK1/SERK3 and SERK4 coreceptors-dependent manner, that modulates various physiological and antimicrobial processes including growth prevention and reactive oxygen species (ROS) response regulation. Prevents general growth and development. The protein is Secreted transmembrane peptide 6 of Arabidopsis thaliana (Mouse-ear cress).